Consider the following 291-residue polypeptide: Ribosomal RNA small subunit methyltransferase I (291 aa).

Belongs to the methyltransferase superfamily. RsmI family.

It localises to the cytoplasm. The catalysed reaction is cytidine(1402) in 16S rRNA + S-adenosyl-L-methionine = 2'-O-methylcytidine(1402) in 16S rRNA + S-adenosyl-L-homocysteine + H(+). In terms of biological role, catalyzes the 2'-O-methylation of the ribose of cytidine 1402 (C1402) in 16S rRNA. The chain is Ribosomal RNA small subunit methyltransferase I from Neisseria meningitidis serogroup A / serotype 4A (strain DSM 15465 / Z2491).